A 219-amino-acid chain; its full sequence is Octanoyltransferase (219 aa).

One can recognise a BPL/LPL catalytic domain in the interval E32 to K207. Substrate is bound by residues R71–H78, S138–G140, and G151–A153. C169 (acyl-thioester intermediate) is an active-site residue.

This sequence belongs to the LipB family.

Its subcellular location is the cytoplasm. It carries out the reaction octanoyl-[ACP] + L-lysyl-[protein] = N(6)-octanoyl-L-lysyl-[protein] + holo-[ACP] + H(+). Its pathway is protein modification; protein lipoylation via endogenous pathway; protein N(6)-(lipoyl)lysine from octanoyl-[acyl-carrier-protein]: step 1/2. Catalyzes the transfer of endogenously produced octanoic acid from octanoyl-acyl-carrier-protein onto the lipoyl domains of lipoate-dependent enzymes. Lipoyl-ACP can also act as a substrate although octanoyl-ACP is likely to be the physiological substrate. The polypeptide is Octanoyltransferase (Shewanella pealeana (strain ATCC 700345 / ANG-SQ1)).